The chain runs to 505 residues: Apolipoprotein N-acyltransferase (505 aa).

The next 6 membrane-spanning stretches (helical) occupy residues 15-46 (AAFV…LLLL), 55-75 (ALIA…WVHV), 89-109 (LFLM…FGWL), 129-149 (LWLI…WLWL), 161-181 (FAPI…AGSL), and 192-212 (MACI…MQWV). Residues 225–471 (IQGNIEQGLK…TGVLKATVTP (247 aa)) form the CN hydrolase domain. The Proton acceptor role is filled by Glu-264. Lys-330 is an active-site residue. Cys-382 acts as the Nucleophile in catalysis. A helical membrane pass occupies residues 479-499 (FLWGTTPLYLWVGLAAGFAFW).

It belongs to the CN hydrolase family. Apolipoprotein N-acyltransferase subfamily.

Its subcellular location is the cell inner membrane. It catalyses the reaction N-terminal S-1,2-diacyl-sn-glyceryl-L-cysteinyl-[lipoprotein] + a glycerophospholipid = N-acyl-S-1,2-diacyl-sn-glyceryl-L-cysteinyl-[lipoprotein] + a 2-acyl-sn-glycero-3-phospholipid + H(+). The protein operates within protein modification; lipoprotein biosynthesis (N-acyl transfer). In terms of biological role, catalyzes the phospholipid dependent N-acylation of the N-terminal cysteine of apolipoprotein, the last step in lipoprotein maturation. This chain is Apolipoprotein N-acyltransferase, found in Vibrio cholerae serotype O1 (strain ATCC 39315 / El Tor Inaba N16961).